A 127-amino-acid chain; its full sequence is MRHYEIVFIVHPDQSEQVPAMIDRYKSIVTARNGQIHRLEDWGRRQLAYPIQKVHKAHYVLMNIECDGEALGELEHAFKFNDAVLRHLTIKMKKAVTTPSPMMKEEKSRSLTPAAGDEGKPAEAAEA.

The tract at residues 96–127 is disordered; it reads VTTPSPMMKEEKSRSLTPAAGDEGKPAEAAEA. A compositionally biased stretch (basic and acidic residues) spans 117–127; that stretch reads DEGKPAEAAEA.

Belongs to the bacterial ribosomal protein bS6 family.

Functionally, binds together with bS18 to 16S ribosomal RNA. This Azoarcus sp. (strain BH72) protein is Small ribosomal subunit protein bS6.